Consider the following 226-residue polypeptide: ATP-dependent Clp protease proteolytic subunit 2 (226 aa).

Catalysis depends on Ser118, which acts as the Nucleophile. His143 is an active-site residue.

Belongs to the peptidase S14 family. As to quaternary structure, fourteen ClpP subunits assemble into 2 heptameric rings which stack back to back to give a disk-like structure with a central cavity, resembling the structure of eukaryotic proteasomes.

It localises to the cytoplasm. It carries out the reaction Hydrolysis of proteins to small peptides in the presence of ATP and magnesium. alpha-casein is the usual test substrate. In the absence of ATP, only oligopeptides shorter than five residues are hydrolyzed (such as succinyl-Leu-Tyr-|-NHMec, and Leu-Tyr-Leu-|-Tyr-Trp, in which cleavage of the -Tyr-|-Leu- and -Tyr-|-Trp bonds also occurs).. Its function is as follows. Cleaves peptides in various proteins in a process that requires ATP hydrolysis. Has a chymotrypsin-like activity. Plays a major role in the degradation of misfolded proteins. This chain is ATP-dependent Clp protease proteolytic subunit 2, found in Synechocystis sp. (strain ATCC 27184 / PCC 6803 / Kazusa).